Consider the following 442-residue polypeptide: Transcriptional coactivator YAP1 (442 aa).

Phosphoserine; by LATS1 and LATS2 occurs at positions 21, 69, and 87. 2 disordered regions span residues 51 to 89 (LPDSFFTPPEPKSHSRQASTDAGTAGTVTPHHVRAHSSP) and 97 to 116 (VSPGALTSMGPANAPPQHLR). S119 carries the phosphoserine; by LATS1 and LATS2 modification. 2 consecutive WW domains span residues 126–159 (MPLPPGWEMAKTPSGQRYFLNHNDQTTTWQDPRK) and 186–219 (GPLPDGWEQAITSEGEIYYINHKNKTTSWLDPRL). The disordered stretch occupies residues 230 to 254 (ISQSAPVKQGSQLPSSPQSGVMSGN). A compositionally biased stretch (low complexity) spans 238-249 (QGSQLPSSPQSG). Positions 247 to 442 (QSGVMSGNNP…IDKENFLTWL (196 aa)) are transactivation domain. The stretch at 258 to 279 (RLQQIHIEKERLRIKQELLRQR) forms a coiled coil. Positions 286-374 (RNQLPTSMEQ…DTLGPGSMAT (89 aa)) are disordered. 3 stretches are compositionally biased toward polar residues: residues 288–304 (QLPTSMEQDGGTQNPVS), 313–329 (RNMTTNSSDPFLNSGTY), and 337–347 (DSGLSMSSYSV).

The protein belongs to the YAP1 family. Post-translationally, phosphorylated by lats1 and lats2; leading to cytoplasmic translocation and inactivation. In terms of tissue distribution, expressed in the notochord, brain, eyes, branchial arches and pectoral fins.

It localises to the cytoplasm. The protein localises to the nucleus. The protein resides in the cell junction. It is found in the tight junction. Its subcellular location is the cell membrane. Functionally, transcriptional regulator which can act both as a coactivator and a corepressor and is the critical downstream regulatory target in the Hippo signaling pathway that plays a pivotal role in organ size control and tumor suppression by restricting proliferation and promoting apoptosis. Required for expansion of the neural plate and neural plate border zone progenitor pools. Acts as a direct regulator of pax3 expression via interaction with tead1. Plays a key role in tissue tension and 3D tissue shape by regulating cortical actomyosin network formation. The chain is Transcriptional coactivator YAP1 (yap1) from Danio rerio (Zebrafish).